A 523-amino-acid polypeptide reads, in one-letter code: GMP synthase [glutamine-hydrolyzing] (523 aa).

Residues 8 to 205 form the Glutamine amidotransferase type-1 domain; the sequence is KILILDFGSQ…VENICGCARS (198 aa). The active-site Nucleophile is the Cys-85. Residues His-179 and Glu-181 contribute to the active site. Residues 206 to 398 form the GMPS ATP-PPase domain; sequence WTPENIIEDA…LGLPAEMLNR (193 aa). Residue 233-239 coordinates ATP; the sequence is SGGVDSS.

In terms of assembly, homodimer.

It catalyses the reaction XMP + L-glutamine + ATP + H2O = GMP + L-glutamate + AMP + diphosphate + 2 H(+). It participates in purine metabolism; GMP biosynthesis; GMP from XMP (L-Gln route): step 1/1. In terms of biological role, catalyzes the synthesis of GMP from XMP. This chain is GMP synthase [glutamine-hydrolyzing], found in Haemophilus ducreyi (strain 35000HP / ATCC 700724).